A 232-amino-acid polypeptide reads, in one-letter code: GFP-like non-fluorescent chromoprotein FP595 (232 aa).

The segment at residues 63-65 (MYG) is a cross-link (2-iminomethyl-5-imidazolinone (Met-Gly)). A (E)-2,3-didehydrotyrosine modification is found at Tyr64.

This sequence belongs to the GFP family. In terms of processing, contains a chromophore consisting of modified amino acid residues. The chromophore is formed by autocatalytic backbone condensation between Xaa-N and Gly-(N+2), oxidation of Tyr-(N+1) to didehydrotyrosine, and formation of a double bond to the alpha-amino nitrogen of residue Tyr-(N+1). Maturation of the chromophore requires nothing other than molecular oxygen. In terms of tissue distribution, tentacle tips.

Functionally, pigment protein that is intensely purple in color. This Anemonia sulcata (Mediterranean snakelocks sea anemone) protein is GFP-like non-fluorescent chromoprotein FP595.